Consider the following 747-residue polypeptide: Heterogeneous nuclear ribonucleoprotein U-like protein 2 (747 aa).

The SAP domain occupies Val-3–Leu-37. 2 disordered regions span residues Glu-40–Asp-242 and Glu-627–Arg-666. A compositionally biased stretch (acidic residues) spans Gly-73–Pro-97. Over residues Glu-115–Pro-125 the composition is skewed to low complexity. The segment covering Gly-137–Gln-147 has biased composition (gly residues). Over residues Gly-148–Asp-163 the composition is skewed to basic and acidic residues. Residue Ser-161 is modified to Phosphoserine. At Thr-165 the chain carries Phosphothreonine. A phosphoserine mark is found at Ser-168, Ser-185, Ser-188, Ser-226, and Ser-228. Basic and acidic residues predominate over residues Ser-185–His-223. Residues Ser-226–Glu-419 form the B30.2/SPRY domain. Residues Pro-232 to Asp-242 are compositionally biased toward acidic residues. Residues Glu-627 to Arg-639 are compositionally biased toward basic and acidic residues. Positions Thr-640–Arg-654 are enriched in basic residues. An omega-N-methylarginine mark is found at Arg-656, Arg-684, Arg-738, and Arg-747.

In terms of assembly, binds to MLF1 and retains it in the nucleus.

It is found in the nucleus. This chain is Heterogeneous nuclear ribonucleoprotein U-like protein 2 (HNRNPUL2), found in Homo sapiens (Human).